We begin with the raw amino-acid sequence, 335 residues long: DNA-directed RNA polymerase subunit alpha (335 aa).

An alpha N-terminal domain (alpha-NTD) region spans residues M1–E233. Residues K264–N335 are alpha C-terminal domain (alpha-CTD).

It belongs to the RNA polymerase alpha chain family. In plastids the minimal PEP RNA polymerase catalytic core is composed of four subunits: alpha, beta, beta', and beta''. When a (nuclear-encoded) sigma factor is associated with the core the holoenzyme is formed, which can initiate transcription.

Its subcellular location is the plastid. The protein localises to the chloroplast. It carries out the reaction RNA(n) + a ribonucleoside 5'-triphosphate = RNA(n+1) + diphosphate. DNA-dependent RNA polymerase catalyzes the transcription of DNA into RNA using the four ribonucleoside triphosphates as substrates. The protein is DNA-directed RNA polymerase subunit alpha of Pinus thunbergii (Japanese black pine).